A 147-amino-acid chain; its full sequence is Hemoglobin subunit gamma (147 aa).

The Globin domain occupies 3 to 147 (HFTEEDKATI…VASALSSRYH (145 aa)). Positions 64 and 93 each coordinate heme b.

The protein belongs to the globin family. Heterotetramer of two alpha chains and two gamma chains in fetal hemoglobin (Hb F). Red blood cells.

Its function is as follows. Gamma chains make up the fetal hemoglobin F, in combination with alpha chains. The sequence is that of Hemoglobin subunit gamma (HBG) from Macaca fuscata fuscata (Japanese macaque).